A 671-amino-acid chain; its full sequence is UvrABC system protein B (671 aa).

Positions 26–183 (EGLENGLAHQ…RRLSELQYSR (158 aa)) constitute a Helicase ATP-binding domain. Position 39–46 (39–46 (GVTGSGKT)) interacts with ATP. The Beta-hairpin signature appears at 92 to 115 (YYDYYQPEAYVPSSDTFIEKDASV). The region spanning 431 to 593 (QVDDLLSEIR…IIPQGLNKKI (163 aa)) is the Helicase C-terminal domain. One can recognise a UVR domain in the interval 631–666 (DQKIRELEAKMYTYAQNLEFEQAAELRDQVHQLRQQ).

This sequence belongs to the UvrB family. As to quaternary structure, forms a heterotetramer with UvrA during the search for lesions. Interacts with UvrC in an incision complex.

It localises to the cytoplasm. The UvrABC repair system catalyzes the recognition and processing of DNA lesions. A damage recognition complex composed of 2 UvrA and 2 UvrB subunits scans DNA for abnormalities. Upon binding of the UvrA(2)B(2) complex to a putative damaged site, the DNA wraps around one UvrB monomer. DNA wrap is dependent on ATP binding by UvrB and probably causes local melting of the DNA helix, facilitating insertion of UvrB beta-hairpin between the DNA strands. Then UvrB probes one DNA strand for the presence of a lesion. If a lesion is found the UvrA subunits dissociate and the UvrB-DNA preincision complex is formed. This complex is subsequently bound by UvrC and the second UvrB is released. If no lesion is found, the DNA wraps around the other UvrB subunit that will check the other stand for damage. The protein is UvrABC system protein B of Yersinia pestis bv. Antiqua (strain Antiqua).